Consider the following 524-residue polypeptide: Chitinase D (524 aa).

Positions 1–30 (MNQAVRFRPVITFALAFILIITWFAPRADA) are cleaved as a signal peptide. One can recognise a Fibronectin type-III domain in the interval 95–180 (VPAGLTSSLV…TSLSVTTSTG (86 aa)). Residues 190-514 (KWLIGYWHNF…NAHRPFLNGL (325 aa)) form the GH18 domain. Residue E303 is the Proton donor of the active site.

It belongs to the glycosyl hydrolase 18 family. Chitinase class II subfamily.

It carries out the reaction Random endo-hydrolysis of N-acetyl-beta-D-glucosaminide (1-&gt;4)-beta-linkages in chitin and chitodextrins.. The chain is Chitinase D (chiD) from Niallia circulans (Bacillus circulans).